We begin with the raw amino-acid sequence, 492 residues long: Putative protein disulfide-isomerase C1F5.02 (492 aa).

Positions 1-22 (MKISNLLAAFLAFSGGFFCASA) are cleaved as a signal peptide. Residues 23 to 128 (EVPKVNKEGL…LVKYMRKQLL (106 aa)) form the Thioredoxin 1 domain. Catalysis depends on nucleophile residues C51 and C54. A disulfide bridge links C51 with C54. N-linked (GlcNAc...) asparagine glycosylation is found at N161 and N257. Positions 323 to 462 (ELTAKAMTKF…LSAFIDKHAS (140 aa)) constitute a Thioredoxin 2 domain. Residues C385 and C388 each act as nucleophile in the active site. A disulfide bridge connects residues C385 and C388. Residues 468 to 492 (KEKESVPAPDLEDQVAVEDEMADEL) form a disordered region. The segment covering 477 to 492 (DLEDQVAVEDEMADEL) has biased composition (acidic residues). A Prevents secretion from ER motif is present at residues 489-492 (ADEL).

Belongs to the protein disulfide isomerase family.

The protein localises to the endoplasmic reticulum lumen. It catalyses the reaction Catalyzes the rearrangement of -S-S- bonds in proteins.. Functionally, participates in the folding of proteins containing disulfide bonds, may be involved in glycosylation, prolyl hydroxylation and triglyceride transfer. This is Putative protein disulfide-isomerase C1F5.02 from Schizosaccharomyces pombe (strain 972 / ATCC 24843) (Fission yeast).